The following is a 346-amino-acid chain: CLOCK-interacting pacemaker (346 aa).

Residues 1–42 (MEKNQKCATEQERFKARSGHGDGQRAEPRKTQTTTESDKDSG) are compositionally biased toward basic and acidic residues. Disordered stretches follow at residues 1 to 83 (MEKN…SQPQ) and 167 to 228 (CARK…KELD). Polar residues predominate over residues 50–68 (CLSSVEQTDTEEGPTTSRW). Residues 179–192 (NQTKRQCSKGHSGS) show a composition bias toward basic residues. Positions 205 to 222 (GVQQGPVDQNVKESSVSA) are enriched in polar residues. Positions 283–315 (MKTKELARHNQATQSQLEKLQEQVQLYATAMSS) form a coiled coil.

It is found in the nucleus. The protein localises to the cytoplasm. Its subcellular location is the cytosol. In terms of biological role, transcriptional repressor which acts as a negative-feedback regulator of CLOCK-BMAL1 transcriptional activity in the circadian-clock mechanism. The physiological relevance of these observations is unsure. The chain is CLOCK-interacting pacemaker (cipc) from Xenopus laevis (African clawed frog).